A 154-amino-acid chain; its full sequence is Prefoldin subunit alpha (154 aa).

The protein belongs to the prefoldin alpha subunit family. In terms of assembly, heterohexamer of two alpha and four beta subunits.

It localises to the cytoplasm. Molecular chaperone capable of stabilizing a range of proteins. Seems to fulfill an ATP-independent, HSP70-like function in archaeal de novo protein folding. This chain is Prefoldin subunit alpha, found in Hyperthermus butylicus (strain DSM 5456 / JCM 9403 / PLM1-5).